The chain runs to 324 residues: NADH-quinone oxidoreductase subunit H (324 aa).

Transmembrane regions (helical) follow at residues 11 to 31 (ILIT…CGAF), 81 to 101 (VIFT…FAIV), 114 to 134 (IGIL…LFAG), 154 to 174 (VSYE…AGSF), 186 to 206 (LWNV…GVAV), 237 to 257 (FFVG…TLFF), 265 to 285 (LPPF…FILI), and 304 to 324 (VCLP…LYNA).

The protein belongs to the complex I subunit 1 family. As to quaternary structure, NDH-1 is composed of 13 different subunits. Subunits NuoA, H, J, K, L, M, N constitute the membrane sector of the complex.

The protein resides in the cell inner membrane. It catalyses the reaction a quinone + NADH + 5 H(+)(in) = a quinol + NAD(+) + 4 H(+)(out). NDH-1 shuttles electrons from NADH, via FMN and iron-sulfur (Fe-S) centers, to quinones in the respiratory chain. The immediate electron acceptor for the enzyme in this species is believed to be ubiquinone. Couples the redox reaction to proton translocation (for every two electrons transferred, four hydrogen ions are translocated across the cytoplasmic membrane), and thus conserves the redox energy in a proton gradient. This subunit may bind ubiquinone. The chain is NADH-quinone oxidoreductase subunit H from Pectobacterium atrosepticum (strain SCRI 1043 / ATCC BAA-672) (Erwinia carotovora subsp. atroseptica).